The following is a 55-amino-acid chain: MIPVRCLSCGKPVSAYFNEYQRRVADGEDPKDVLDDLGLKRYCCRRMLISHVETW.

The Zn(2+) site is built by C6, C9, C43, and C44.

This sequence belongs to the archaeal Rpo10/eukaryotic RPB10 RNA polymerase subunit family. Part of the RNA polymerase complex. The cofactor is Zn(2+).

The protein resides in the cytoplasm. It carries out the reaction RNA(n) + a ribonucleoside 5'-triphosphate = RNA(n+1) + diphosphate. Its function is as follows. DNA-dependent RNA polymerase (RNAP) catalyzes the transcription of DNA into RNA using the four ribonucleoside triphosphates as substrates. This chain is DNA-directed RNA polymerase subunit Rpo10, found in Methanothermobacter thermautotrophicus (strain ATCC 29096 / DSM 1053 / JCM 10044 / NBRC 100330 / Delta H) (Methanobacterium thermoautotrophicum).